We begin with the raw amino-acid sequence, 370 residues long: UDP-3-O-acylglucosamine N-acyltransferase (370 aa).

The Proton acceptor role is filled by histidine 252. Positions 350–370 (AAGRQDGPAANAASSSAGDKA) are disordered. Residues 358–370 (AANAASSSAGDKA) show a composition bias toward low complexity.

It belongs to the transferase hexapeptide repeat family. LpxD subfamily. In terms of assembly, homotrimer.

The catalysed reaction is a UDP-3-O-[(3R)-3-hydroxyacyl]-alpha-D-glucosamine + a (3R)-hydroxyacyl-[ACP] = a UDP-2-N,3-O-bis[(3R)-3-hydroxyacyl]-alpha-D-glucosamine + holo-[ACP] + H(+). Its pathway is bacterial outer membrane biogenesis; LPS lipid A biosynthesis. Functionally, catalyzes the N-acylation of UDP-3-O-acylglucosamine using 3-hydroxyacyl-ACP as the acyl donor. Is involved in the biosynthesis of lipid A, a phosphorylated glycolipid that anchors the lipopolysaccharide to the outer membrane of the cell. This Paraburkholderia xenovorans (strain LB400) protein is UDP-3-O-acylglucosamine N-acyltransferase.